We begin with the raw amino-acid sequence, 196 residues long: Phosphoheptose isomerase (196 aa).

The SIS domain occupies 33 to 192 (LIQSLKNGGK…ESECGENGNT (160 aa)). Residue 48–50 (NGG) participates in substrate binding. Positions 57 and 61 each coordinate Zn(2+). Substrate-binding positions include glutamate 61, 90–91 (ND), 116–118 (STS), serine 121, and glutamine 168. Zn(2+) is bound by residues glutamine 168 and histidine 176.

Belongs to the SIS family. GmhA subfamily. In terms of assembly, homotetramer. Requires Zn(2+) as cofactor.

Its subcellular location is the cytoplasm. It catalyses the reaction 2 D-sedoheptulose 7-phosphate = D-glycero-alpha-D-manno-heptose 7-phosphate + D-glycero-beta-D-manno-heptose 7-phosphate. It functions in the pathway carbohydrate biosynthesis; D-glycero-D-manno-heptose 7-phosphate biosynthesis; D-glycero-alpha-D-manno-heptose 7-phosphate and D-glycero-beta-D-manno-heptose 7-phosphate from sedoheptulose 7-phosphate: step 1/1. In terms of biological role, catalyzes the isomerization of sedoheptulose 7-phosphate in D-glycero-D-manno-heptose 7-phosphate. The sequence is that of Phosphoheptose isomerase from Helicobacter hepaticus (strain ATCC 51449 / 3B1).